Reading from the N-terminus, the 141-residue chain is Large ribosomal subunit protein uL11 (141 aa).

Belongs to the universal ribosomal protein uL11 family. Part of the ribosomal stalk of the 50S ribosomal subunit. Interacts with L10 and the large rRNA to form the base of the stalk. L10 forms an elongated spine to which L12 dimers bind in a sequential fashion forming a multimeric L10(L12)X complex. One or more lysine residues are methylated.

Functionally, forms part of the ribosomal stalk which helps the ribosome interact with GTP-bound translation factors. The protein is Large ribosomal subunit protein uL11 of Levilactobacillus brevis (strain ATCC 367 / BCRC 12310 / CIP 105137 / JCM 1170 / LMG 11437 / NCIMB 947 / NCTC 947) (Lactobacillus brevis).